Reading from the N-terminus, the 525-residue chain is Mitoguardin (525 aa).

A helical transmembrane segment spans residues 26–45 (VVLFSLTAGVALMSVLSRFL). The segment covering 47–67 (RRKPPRPPRRARKYTGRRNRN) has biased composition (basic residues). 2 disordered regions span residues 47–73 (RRKP…RSPN) and 210–239 (DEAE…GSDP). Residues 211 to 220 (EAEEEAGEAD) are compositionally biased toward acidic residues.

Belongs to the mitoguardin family. As to quaternary structure, interacts with zuc.

The protein localises to the mitochondrion outer membrane. In terms of biological role, regulator of mitochondrial fusion required to maintain neuronal homeostasis. This Drosophila melanogaster (Fruit fly) protein is Mitoguardin.